The following is a 284-amino-acid chain: Phosphate import ATP-binding protein PstB 2 (284 aa).

The span at 1 to 22 shows a compositional bias: polar residues; it reads MTLLSTLRGISSPARQQPGTQS. The disordered stretch occupies residues 1 to 29; sequence MTLLSTLRGISSPARQQPGTQSESRRGGD. The ABC transporter domain occupies 36–278; that stretch reads LAVAGVSHGF…PDDARARKFI (243 aa). 68 to 75 provides a ligand contact to ATP; the sequence is GPSGTGKT.

This sequence belongs to the ABC transporter superfamily. Phosphate importer (TC 3.A.1.7) family. As to quaternary structure, the complex is composed of two ATP-binding proteins (PstB), two transmembrane proteins (PstC and PstA) and a solute-binding protein (PstS).

Its subcellular location is the cell membrane. The enzyme catalyses phosphate(out) + ATP + H2O = ADP + 2 phosphate(in) + H(+). In terms of biological role, part of the ABC transporter complex PstSACB involved in phosphate import. Responsible for energy coupling to the transport system. The protein is Phosphate import ATP-binding protein PstB 2 of Natronomonas pharaonis (strain ATCC 35678 / DSM 2160 / CIP 103997 / JCM 8858 / NBRC 14720 / NCIMB 2260 / Gabara) (Halobacterium pharaonis).